The chain runs to 258 residues: Thiazole synthase (258 aa).

The active-site Schiff-base intermediate with DXP is K100. 1-deoxy-D-xylulose 5-phosphate-binding positions include G161, 187 to 188 (AG), and 209 to 210 (NT).

It belongs to the ThiG family. Homotetramer. Forms heterodimers with either ThiH or ThiS.

It localises to the cytoplasm. The catalysed reaction is [ThiS sulfur-carrier protein]-C-terminal-Gly-aminoethanethioate + 2-iminoacetate + 1-deoxy-D-xylulose 5-phosphate = [ThiS sulfur-carrier protein]-C-terminal Gly-Gly + 2-[(2R,5Z)-2-carboxy-4-methylthiazol-5(2H)-ylidene]ethyl phosphate + 2 H2O + H(+). The protein operates within cofactor biosynthesis; thiamine diphosphate biosynthesis. In terms of biological role, catalyzes the rearrangement of 1-deoxy-D-xylulose 5-phosphate (DXP) to produce the thiazole phosphate moiety of thiamine. Sulfur is provided by the thiocarboxylate moiety of the carrier protein ThiS. In vitro, sulfur can be provided by H(2)S. The sequence is that of Thiazole synthase from Campylobacter jejuni subsp. jejuni serotype O:6 (strain 81116 / NCTC 11828).